Reading from the N-terminus, the 300-residue chain is MFKRIFLLTLTNIAVIFLLTLFISLLHLDRWLNAYGIDYQTLFLFSMVVGFTGSFISLAISKWMAKMAYNIHVIQEPSNEAERWLVETVAELAKRANIRMPEVGIYESPEVNAFATGPSRSNALVAVSTGILSQMNKKQIAGVLAHEITHINNGDMVTMTLLQGVVNTFVVFLSRIIGFFVDRLFSRNEERESIGIGFYLGMFISEIVLGLLASIIVAWYSRMREFRADAGGAHLAGKEAMISALKKLKQIMEGESAFIDERSPALNAFKINGRPGGILALLATHPPLDERIKALERIPD.

2 consecutive transmembrane segments (helical) span residues 5-25 (IFLL…FISL) and 41-61 (TLFL…LAIS). Histidine 146 provides a ligand contact to Zn(2+). Glutamate 147 is an active-site residue. Zn(2+) is bound at residue histidine 150. A run of 2 helical transmembrane segments spans residues 161-181 (LLQG…GFFV) and 196-216 (IGFY…ASII). Glutamate 225 serves as a coordination point for Zn(2+).

This sequence belongs to the peptidase M48B family. It depends on Zn(2+) as a cofactor.

The protein localises to the cell inner membrane. This chain is Protease HtpX homolog, found in Methylacidiphilum infernorum (isolate V4) (Methylokorus infernorum (strain V4)).